Here is a 408-residue protein sequence, read N- to C-terminus: Multidrug resistance protein MdtG (408 aa).

The next 11 membrane-spanning stretches (helical) occupy residues 16–36, 58–78, 92–112, 115–135, 146–166, 173–193, 224–244, 253–273, 290–310, 319–339, and 378–398; these read LIVA…VMPF, IVFS…GGLA, LGMG…QFLI, ALLG…ATQV, TLST…GLLA, PVFF…LLCI, LFVT…ILTL, VGNI…AALL, ILIA…FVQT, FLLG…LVYN, and AVFL…WNSL.

Belongs to the major facilitator superfamily. DHA1 family. MdtG (TC 2.A.1.2.20) subfamily.

Its subcellular location is the cell inner membrane. Confers resistance to fosfomycin and deoxycholate. The sequence is that of Multidrug resistance protein MdtG from Escherichia fergusonii (strain ATCC 35469 / DSM 13698 / CCUG 18766 / IAM 14443 / JCM 21226 / LMG 7866 / NBRC 102419 / NCTC 12128 / CDC 0568-73).